The sequence spans 325 residues: Putative gluconeogenesis factor (325 aa).

This sequence belongs to the gluconeogenesis factor family.

It localises to the cytoplasm. Functionally, required for morphogenesis under gluconeogenic growth conditions. This chain is Putative gluconeogenesis factor, found in Streptococcus pyogenes serotype M3 (strain ATCC BAA-595 / MGAS315).